A 297-amino-acid chain; its full sequence is uncharacterized protein (297 aa).

Glutamate 46 is a catalytic residue.

It belongs to the PhzF family. As to quaternary structure, homodimer and homotetramer.

This is an uncharacterized protein from Salmonella typhimurium (strain LT2 / SGSC1412 / ATCC 700720).